The sequence spans 416 residues: Ribulose bisphosphate carboxylase large chain (416 aa).

Substrate is bound by residues Asn-102 and Thr-152. Residue Lys-154 is the Proton acceptor of the active site. Residue Lys-156 participates in substrate binding. Mg(2+) contacts are provided by Lys-180, Asp-182, and Glu-183. At Lys-180 the chain carries N6-carboxylysine. The active-site Proton acceptor is the His-273. Substrate-binding residues include Arg-274, His-306, and Ser-358.

It belongs to the RuBisCO large chain family. Type I subfamily. As to quaternary structure, heterohexadecamer of 8 large chains and 8 small chains; disulfide-linked. The disulfide link is formed within the large subunit homodimers. Mg(2+) is required as a cofactor. Post-translationally, the disulfide bond which can form in the large chain dimeric partners within the hexadecamer appears to be associated with oxidative stress and protein turnover.

It localises to the plastid. It is found in the chloroplast. It catalyses the reaction 2 (2R)-3-phosphoglycerate + 2 H(+) = D-ribulose 1,5-bisphosphate + CO2 + H2O. The enzyme catalyses D-ribulose 1,5-bisphosphate + O2 = 2-phosphoglycolate + (2R)-3-phosphoglycerate + 2 H(+). RuBisCO catalyzes two reactions: the carboxylation of D-ribulose 1,5-bisphosphate, the primary event in carbon dioxide fixation, as well as the oxidative fragmentation of the pentose substrate in the photorespiration process. Both reactions occur simultaneously and in competition at the same active site. The sequence is that of Ribulose bisphosphate carboxylase large chain (rbcL) from Arthropteris beckleri (Fern).